Reading from the N-terminus, the 223-residue chain is Small ribosomal subunit protein uS3 (223 aa).

Residues 39-117 (IREHLRKKPS…RPELNAKLVA (79 aa)) enclose the KH type-2 domain.

This sequence belongs to the universal ribosomal protein uS3 family. In terms of assembly, part of the 30S ribosomal subunit. Forms a tight complex with proteins S10 and S14.

Its function is as follows. Binds the lower part of the 30S subunit head. Binds mRNA in the 70S ribosome, positioning it for translation. The chain is Small ribosomal subunit protein uS3 from Chlamydia caviae (strain ATCC VR-813 / DSM 19441 / 03DC25 / GPIC) (Chlamydophila caviae).